Here is a 476-residue protein sequence, read N- to C-terminus: Cytoplasmic 60S subunit biogenesis factor ZNF622 (476 aa).

Position 2 is an N-acetylalanine (Ala2). 2 consecutive U1-type zinc fingers follow at residues 4 to 28 (LTCITCRVAFRDAELQRAHYKTDWH) and 69 to 93 (TYCTACGKKFATFNAYENHLGSRRH). Positions 137–243 (AIKAQPSTSP…AEDAAAEESP (107 aa)) are disordered. A compositionally biased stretch (basic and acidic residues) spans 167–177 (VPERDPTEKPP). Residues 195-239 (EDGEEEGEEEEEDDEDEDWEDIDSDDGLECEDPGVEDQDAEDAAA) show a composition bias toward acidic residues. Ser275 is modified (phosphoserine).

It belongs to the REI1 family. Homo- and heterodimer. Associates with pre-60S ribosomal particles. Interacts with MELK and MYBL2. Interacts with DNAJC21. In terms of processing, phosphorylated by MELK. The phosphorylation may redirect the protein to the nucleus. Ubiquitinated by HECTD1, leading to its degradation.

It localises to the cytoplasm. It is found in the nucleus. Its function is as follows. Pre-60S-associated cytoplasmic factor involved in the cytoplasmic maturation of the 60S subunit. This chain is Cytoplasmic 60S subunit biogenesis factor ZNF622 (Znf622), found in Mus musculus (Mouse).